We begin with the raw amino-acid sequence, 145 residues long: Large ribosomal subunit protein uL14m (145 aa).

A mitochondrion-targeting transit peptide spans 1 to 30 (MAFFTGLWGPFTCVSRVLSHHCFSTTGSLS).

It belongs to the universal ribosomal protein uL14 family. Component of the mitochondrial large ribosomal subunit (mt-LSU). Mature mammalian 55S mitochondrial ribosomes consist of a small (28S) and a large (39S) subunit. The 28S small subunit contains a 12S ribosomal RNA (12S mt-rRNA) and 30 different proteins. The 39S large subunit contains a 16S rRNA (16S mt-rRNA), a copy of mitochondrial valine transfer RNA (mt-tRNA(Val)), which plays an integral structural role, and 52 different proteins. Interacts with MALSU1.

The protein localises to the mitochondrion. Functionally, forms part of 2 intersubunit bridges in the assembled ribosome. Upon binding to MALSU1 intersubunit bridge formation is blocked, preventing ribosome formation and repressing translation. The polypeptide is Large ribosomal subunit protein uL14m (MRPL14) (Homo sapiens (Human)).